Consider the following 117-residue polypeptide: Ribonuclease P protein component 4 (117 aa).

Residues Cys63, Cys66, Cys92, and Cys95 each contribute to the Zn(2+) site.

Belongs to the eukaryotic/archaeal RNase P protein component 4 family. As to quaternary structure, consists of a catalytic RNA component and at least 4 protein subunits. Forms a subcomplex with Rnp1 which stimulates the catalytic RNA. Requires Zn(2+) as cofactor.

It is found in the cytoplasm. It catalyses the reaction Endonucleolytic cleavage of RNA, removing 5'-extranucleotides from tRNA precursor.. In terms of biological role, part of ribonuclease P, a protein complex that generates mature tRNA molecules by cleaving their 5'-ends. The RNA is catalytic, but its KM for pre-tRNA is 170-fold decreased in the presence of the 4 known protein subunits (Rnp1-4). The protein subunits also decrease the amount of Mg(2+) needed for activity. This chain is Ribonuclease P protein component 4, found in Pyrococcus furiosus (strain ATCC 43587 / DSM 3638 / JCM 8422 / Vc1).